The following is a 255-amino-acid chain: Pimeloyl-[acyl-carrier protein] methyl ester esterase (255 aa).

Residues L16–P242 form the AB hydrolase-1 domain. Substrate-binding positions include W22, S82–L83, and F143–Q147. S82 serves as the catalytic Nucleophile. Active-site residues include D207 and H235. H235 contributes to the substrate binding site.

This sequence belongs to the AB hydrolase superfamily. Carboxylesterase BioH family. In terms of assembly, monomer.

The protein resides in the cytoplasm. It carries out the reaction 6-carboxyhexanoyl-[ACP] methyl ester + H2O = 6-carboxyhexanoyl-[ACP] + methanol + H(+). It functions in the pathway cofactor biosynthesis; biotin biosynthesis. In terms of biological role, the physiological role of BioH is to remove the methyl group introduced by BioC when the pimeloyl moiety is complete. It allows to synthesize pimeloyl-ACP via the fatty acid synthetic pathway through the hydrolysis of the ester bonds of pimeloyl-ACP esters. In Vibrio vulnificus (strain CMCP6), this protein is Pimeloyl-[acyl-carrier protein] methyl ester esterase.